Here is a 326-residue protein sequence, read N- to C-terminus: Interleukin-1-binding protein (326 aa).

The N-terminal stretch at 1–18 (MSILPVIFLSIFFYSSFV) is a signal peptide. Ig-like domains are found at residues 24–115 (PECI…LNLT), 122–212 (SNID…RIVK), and 221–322 (PSTM…KTVT). A disulfide bridge connects residues Cys-48 and Cys-99. Residues Asn-80, Asn-103, and Asn-113 are each glycosylated (N-linked (GlcNAc...) asparagine; by host). A disulfide bond links Cys-143 and Cys-194. 2 N-linked (GlcNAc...) asparagine; by host glycosylation sites follow: Asn-206 and Asn-237. Residues Cys-242 and Cys-309 are joined by a disulfide bond.

It belongs to the interleukin-1 receptor family. In terms of assembly, interacts with mouse Il1b.

It is found in the secreted. Its function is as follows. May reduce the host inflammatory response by interacting with inteleukin-1 beta (Il1b) and thus decreasing the association between IL1B and its cellular receptor. The sequence is that of Interleukin-1-binding protein (OPG201) from Vaccinia virus (strain Western Reserve) (VACV).